The chain runs to 551 residues: Arginine--tRNA ligase (551 aa).

The short motif at 123 to 133 (ANPTGPLTIGR) is the 'HIGH' region element.

The protein belongs to the class-I aminoacyl-tRNA synthetase family. As to quaternary structure, monomer.

The protein resides in the cytoplasm. The catalysed reaction is tRNA(Arg) + L-arginine + ATP = L-arginyl-tRNA(Arg) + AMP + diphosphate. This Chlorobaculum parvum (strain DSM 263 / NCIMB 8327) (Chlorobium vibrioforme subsp. thiosulfatophilum) protein is Arginine--tRNA ligase.